We begin with the raw amino-acid sequence, 173 residues long: uncharacterized protein (173 aa).

Transmembrane regions (helical) follow at residues 24–44 (VAFIAIPISQFCFFNLLWLFF), 82–102 (YILFNILIFATNILVICSYFI), and 135–155 (LIKRFLAYITFPIGIFFILFS).

It localises to the cell membrane. This is an uncharacterized protein from Rickettsia prowazekii (strain Madrid E).